Reading from the N-terminus, the 274-residue chain is Probable ribosomal RNA small subunit methyltransferase A (274 aa).

S-adenosyl-L-methionine contacts are provided by His-22, Leu-24, Gly-50, Glu-71, Asp-99, and Asn-114.

Belongs to the class I-like SAM-binding methyltransferase superfamily. rRNA adenine N(6)-methyltransferase family. RsmA subfamily.

It is found in the cytoplasm. Specifically dimethylates two adjacent adenosines in the loop of a conserved hairpin near the 3'-end of 16S rRNA in the 30S particle. May play a critical role in biogenesis of 30S subunits. In Natronomonas pharaonis (strain ATCC 35678 / DSM 2160 / CIP 103997 / JCM 8858 / NBRC 14720 / NCIMB 2260 / Gabara) (Halobacterium pharaonis), this protein is Probable ribosomal RNA small subunit methyltransferase A.